The following is a 369-amino-acid chain: uncharacterized protein (369 aa).

At Lys184 the chain carries N6-(pyridoxal phosphate)lysine.

The protein belongs to the class-V pyridoxal-phosphate-dependent aminotransferase family. Pyridoxal 5'-phosphate serves as cofactor.

This is an uncharacterized protein from Helicobacter pylori (strain J99 / ATCC 700824) (Campylobacter pylori J99).